We begin with the raw amino-acid sequence, 288 residues long: Putative alkaline ceramidase dcd3A (288 aa).

Asparagine 23 carries an N-linked (GlcNAc...) asparagine glycan. 7 helical membrane passes run 41 to 61, 78 to 98, 105 to 125, 146 to 166, 172 to 192, 206 to 226, and 240 to 260; these read IISL…GTGV, VILS…YHAT, LFDE…MVTV, HLLP…ILVI, ILQV…IYLI, SYLY…WVVE, and LHAF…QFLI.

This sequence belongs to the alkaline ceramidase family.

The protein resides in the membrane. The protein is Putative alkaline ceramidase dcd3A (dcd3A) of Dictyostelium discoideum (Social amoeba).